We begin with the raw amino-acid sequence, 322 residues long: ADP,ATP carrier protein (322 aa).

3 Solcar repeats span residues 25–118, 130–222, and 230–316; these read STFF…FKKM, KWFA…LKPV, and GNFL…VQLL. A run of 5 helical transmembrane segments spans residues 27–54, 95–119, 128–148, 198–219, and 233–253; these read FFFDFMMGGVSAAVSKTAAAPIERVKLL, TANVLRYFPTQALNFAFKDKFKKMF, YAKWFAGNLASGGAAGAASLL, FGPSVVGIVVYRGLYFGMYDTL, and LASFLLGWAVTTGSGVASYPL. The ADP site is built by R100 and K112. An ADP-binding site is contributed by R257. Residues 257-262 form an important for transport activity region; sequence RRRMMM. The short motif at 257–262 is the Nucleotide carrier signature motif element; it reads RRRMMM. The helical transmembrane segment at 293–313 threads the bilayer; it reads AGANILRGVAGAGVLSIYDQV.

This sequence belongs to the mitochondrial carrier (TC 2.A.29) family. In terms of assembly, monomer.

It localises to the mitochondrion inner membrane. The catalysed reaction is ADP(in) + ATP(out) = ADP(out) + ATP(in). The matrix-open state (m-state) is inhibited by the membrane-permeable bongkrekic acid (BKA). The cytoplasmic-open state (c-state) is inhibited by the membrane-impermeable toxic inhibitor carboxyatractyloside (CATR). Its function is as follows. ADP:ATP antiporter that mediates import of ADP into the mitochondrial matrix for ATP synthesis, and export of ATP out to fuel the cell. Cycles between the cytoplasmic-open state (c-state) and the matrix-open state (m-state): operates by the alternating access mechanism with a single substrate-binding site intermittently exposed to either the cytosolic (c-state) or matrix (m-state) side of the inner mitochondrial membrane. The sequence is that of ADP,ATP carrier protein (anc1) from Schizosaccharomyces pombe (strain 972 / ATCC 24843) (Fission yeast).